The sequence spans 330 residues: Putative protein DDB_G0285185 (330 aa).

A disordered region spans residues 212 to 240 (NKLQNQVQSSPKLSSPITKNKEQIVSTTS). Residues 214–240 (LQNQVQSSPKLSSPITKNKEQIVSTTS) show a composition bias toward polar residues.

This chain is Putative protein DDB_G0285185, found in Dictyostelium discoideum (Social amoeba).